We begin with the raw amino-acid sequence, 468 residues long: Zinc finger protein mex-5 (468 aa).

Low complexity predominate over residues 1-19 (MKAASNSVSSAGGSVSPTT). The tract at residues 1-32 (MKAASNSVSSAGGSVSPTTTQPPLPPGQSSHP) is disordered. Thr186 is modified (phosphothreonine; by mbk-2). A compositionally biased stretch (basic and acidic residues) spans 243 to 254 (NHFHEHRGEKFG). The tract at residues 243–269 (NHFHEHRGEKFGRRGFPIPETDSQQPP) is disordered. 2 consecutive C3H1-type zinc fingers follow at residues 270 to 299 (NYKT…HGLK) and 314 to 344 (KYKT…HPTD). The disordered stretch occupies residues 414-468 (DLQAGGDYNQPESNEDDLPPHLRRNRRENPPMNKRRTSLSTKWTSEENLGLRGHY). A compositionally biased stretch (polar residues) spans 451–460 (SLSTKWTSEE). Ser458 is subject to Phosphoserine.

In terms of assembly, interacts (when phosphorylated on Thr-186) with plk-1 (via POLO box domain) and plk-2 (via POLO box domain). In terms of processing, phosphorylation on Ser-458 by par-1 promotes localization of the protein to the anterior cytoplasm of the zygote. Phosphorylation by mbk-1 appears to be required for subsequent phosphorylation by plk-1. In terms of tissue distribution, asymmetrically localized to the anterior of the zygote before mitotic division, then differentially distributed to the somatic blastomere precursor cells.

Its subcellular location is the cytoplasm. Its function is as follows. Functions with mex-6 to affect embryonic viability, establish soma germline asymmetry in embryos and establish plk-1, pie-1, mex-1, and pos-1 asymmetry in embryos. Also affects formation of intestinal cells. Binds to mRNA in vitro, and inhibits pgl-3-mediated P-granule formation, probably by competing with pgl-3 for binding to mRNA. Required for neg-1 expression in anterior blastomeres during embryogenesis. This is Zinc finger protein mex-5 from Caenorhabditis elegans.